The primary structure comprises 467 residues: Glutamate--tRNA ligase 1 (467 aa).

A 'HIGH' region motif is present at residues 8–18 (PSPTGHLHVGG). The 'KMSKS' region signature appears at 230–234 (PLSKR). An ATP-binding site is contributed by lysine 233.

It belongs to the class-I aminoacyl-tRNA synthetase family. Glutamate--tRNA ligase type 1 subfamily. As to quaternary structure, monomer.

The protein resides in the cytoplasm. The enzyme catalyses tRNA(Glu) + L-glutamate + ATP = L-glutamyl-tRNA(Glu) + AMP + diphosphate. Its function is as follows. Catalyzes the attachment of glutamate to tRNA(Glu) in a two-step reaction: glutamate is first activated by ATP to form Glu-AMP and then transferred to the acceptor end of tRNA(Glu). The protein is Glutamate--tRNA ligase 1 of Petrotoga mobilis (strain DSM 10674 / SJ95).